The sequence spans 2119 residues: Outer kinetochore KNL1 complex subunit KNL1 (2119 aa).

Residues 1 to 59 (MDGVYSEANEENDNTQRPVRRQHSSILKPPRSPLQDLKCGNQTNQEPNPPRKRKSSRRV) form a disordered region. Residues 1–202 (MDGVYSEANE…SDNFIKRLKT (202 aa)) are may mediate oligomerization. 2 interaction with microtubules regions span residues 17 to 34 (RPVR…RSPL) and 53 to 80 (RKSS…ERNS). The segment at 23 to 80 (HSSILKPPRSPLQDLKCGNQTNQEPNPPRKRKSSRRVSFADTIKVFQTESHMKTERNS) is interaction with PP1CA; contains the protein phosphatase 1 (PP1) interaction motifs SILK, RVXF and phi-phi. Phosphoserine occurs at positions 24, 32, and 60. The interaction with BUB1 stretch occupies residues 124 to 140 (ENQMDLTASHTVMITKG). Residues 160–179 (ENLKHHAANSRIKKDLACST) form an interaction with BUB1B region. Phosphoserine is present on S538. Phosphothreonine is present on residues T540 and T739. Residues 723–827 (DKTILFSEGN…MTKSHTVFID (105 aa)) form repeat 1. Residues 723–1027 (DKTILFSEGN…VTRSHTVFID (305 aa)) form a 2 X 104 AA approximate repeats region. S794 and S878 each carry phosphoserine. The stretch at 923–1027 (KSITFPENDK…VTRSHTVFID (105 aa)) is repeat 2. 2 positions are modified to phosphoserine: S1243 and S1464. The tract at residues 1557–1583 (SQRESLPSENKTENCRAQKRTRVEEND) is disordered. Residues 1566–1583 (NKTENCRAQKRTRVEEND) are compositionally biased toward basic and acidic residues. The short motif at 1577–1590 (TRVEENDVTNEKKI) is the Nuclear localization signal element. Phosphoserine is present on residues S1616, S1627, and S1642. The interval 1763–1890 (KVKDYSDEEL…FLEVETQKTQ (128 aa)) is required for interaction with ZWINT. The stretch at 1799–1890 (VALYNKLVHS…FLEVETQKTQ (92 aa)) forms a coiled coil. Residues 1873–2093 (EEEELQRKFL…GKTGHDEIAA (221 aa)) form an interaction with NSL1, DSN1 and required for assembly into the outer kinetochore region.

As to quaternary structure, component of the KNL1 complex composed of KNL1 and ZWINT. Part of the ten-subunit outer kinetochore KMN network that includes the KNL1, MIS12 and NDC80 complexes; a bioriented kinetochore contains approximately 150 copies of the network. Interacts (via C-terminus) with the MIS12 complex subunits NSL1 (via C-terminus), PMF1 and DSN1; the interaction is direct. Interacts (via N-terminal region) with BUB1B (via BUB1 N-terminal domain); the interaction is direct and is required for cell cycle arrest upon activation of the mitotic spindle assembly checkpoint. Interacts (via N-terminal region) with BUB1 (via BUB1 N-terminal domain); the interaction is direct. Interacts with the protein phosphatase PP1 subunit PPP1CA; the interaction is direct and mutually exclusive with binding to microtubules. Interacts with the protein phosphatase PP1 subunit PPP1CC; the interaction is direct and mutually exclusive with binding to microtubules. Post-translationally, phosphorylation by AURKB negatively regulates its interaction with protein phosphatase 1 (PP1) subunit PPP1CA and with microtubules. Expressed in oocytes during meiotic progression (at protein level). Expressed during spermatogenesis.

It is found in the nucleus. Its subcellular location is the chromosome. The protein localises to the centromere. The protein resides in the kinetochore. It localises to the cytoplasm. Functionally, acts as a component of the outer kinetochore KNL1 complex that serves as a docking point for spindle assembly checkpoint components and mediates microtubule-kinetochore interactions. Kinetochores, consisting of a centromere-associated inner segment and a microtubule-contacting outer segment, play a crucial role in chromosome segregation by mediating the physical connection between centromeric DNA and spindle microtubules. The outer kinetochore is made up of the ten-subunit KMN network, comprising the MIS12, NDC80 and KNL1 complexes, and auxiliary microtubule-associated components; together they connect the outer kinetochore with the inner kinetochore, bind microtubules, and mediate interactions with mitotic checkpoint proteins that delay anaphase until chromosomes are bioriented on the spindle. Required for kinetochore binding by a distinct subset of kMAPs (kinetochore-bound microtubule-associated proteins) and motors. Acts in coordination with CENPK to recruit the NDC80 complex to the outer kinetochore. Can bind either to microtubules or to the protein phosphatase 1 (PP1) catalytic subunits PPP1CA and PPP1CC (via overlapping binding sites), it has higher affinity for PP1. Recruits MAD2L1 to the kinetochore and also directly links BUB1 and BUB1B to the kinetochore. In addition to orienting mitotic chromosomes, it is also essential for alignment of homologous chromosomes during meiotic metaphase I. In meiosis I, required to activate the spindle assembly checkpoint at unattached kinetochores to correct erroneous kinetochore-microtubule attachments. This is Outer kinetochore KNL1 complex subunit KNL1 from Mus musculus (Mouse).